Here is a 446-residue protein sequence, read N- to C-terminus: MDLQIDQKIINELLNERDYFDTNETYYCIVDQQHVIDLYQKDLTESIISDNIQKDGYFFTDINTVLDFIANGEFLLQLKVPSKNHELVVISVESGWKSNMILMDSIYCLDSISTFEFLYKKNIDHNKLVSLARKYLNSEMLDFLIDKGLRMRPNLKYISDWATITNNPLESRFNSKLLSRIPFLAVTDTLPGQNNGICIINNVILTDIENLFCELSKGKFVLEVLIPVNEFDKKILMNFNSKGKVWVSEVYCVGYQNLDDISILQHLIALGCNKMHVLLFTIKSHRESSTTMLLSNYVFDKIELEYALCIAAVSGNFNVFSSIINTVKNSYYTTEQKISSLINLDLILREEVNLPVRINYTPTTYTDIILVLAVIGGSVEIICLLLKYFYQQIIDNYHILTKYSIMYENGDMMDLLRNIYKGFYSNFQTNNESDSLFNKNILKTDN.

6 ANK repeats span residues 71 to 100 (NGEFLLQLKVPSKNHELVVISVESGWKSNM), 124 to 153 (DHNKLVSLARKYLNSEMLDFLIDKGLRMRP), 206 to 237 (TDIENLFCELSKGKFVLEVLIPVNEFDKKILM), 245 to 277 (VWVSEVYCVGYQNLDDISILQHLIALGCNKMHV), 303 to 332 (ELEYALCIAAVSGNFNVFSSIINTVKNSYY), and 365 to 394 (YTDIILVLAVIGGSVEIICLLLKYFYQQII).

In Acanthamoeba polyphaga (Amoeba), this protein is Putative ankyrin repeat protein L273.